The chain runs to 374 residues: uncharacterized protein (374 aa).

The interval 1 to 46 is disordered; that stretch reads MVNEEEKDLTAEGDSNNTGVSPDSIKNKTLDFYPKEKTTERKTRSR. Over residues 25 to 46 the composition is skewed to basic and acidic residues; that stretch reads IKNKTLDFYPKEKTTERKTRSR. Helical transmembrane passes span 70–90, 127–147, 153–173, 199–219, 242–262, and 312–332; these read YAYI…FIAA, WVFY…KIGI, TIVY…IPVI, IWLF…YGLV, ISIA…MLAI, and YFFG…AITI.

This sequence to M.genitalium MG432 and MG443.

The protein resides in the cell membrane. This is an uncharacterized protein from Spiroplasma citri.